The primary structure comprises 173 residues: Adenine phosphoribosyltransferase (173 aa).

It belongs to the purine/pyrimidine phosphoribosyltransferase family. As to quaternary structure, homodimer.

The protein resides in the cytoplasm. The catalysed reaction is AMP + diphosphate = 5-phospho-alpha-D-ribose 1-diphosphate + adenine. Its pathway is purine metabolism; AMP biosynthesis via salvage pathway; AMP from adenine: step 1/1. Functionally, catalyzes a salvage reaction resulting in the formation of AMP, that is energically less costly than de novo synthesis. This chain is Adenine phosphoribosyltransferase, found in Thermoanaerobacter pseudethanolicus (strain ATCC 33223 / 39E) (Clostridium thermohydrosulfuricum).